We begin with the raw amino-acid sequence, 388 residues long: Palmitoyltransferase ZDHHC18 (388 aa).

Positions 1–67 (MKDCEYQQIS…GSGSLGRRPR (67 aa)) are disordered. The Cytoplasmic portion of the chain corresponds to 1-90 (MKDCEYQQIS…CGGRLMLAGH (90 aa)). A compositionally biased stretch (low complexity) spans 10-27 (SPGAAPLPASPGARRPGP). Serine 19 is subject to Phosphoserine. Over residues 28–46 (AASPTPGPGPAPPAAPAPP) the composition is skewed to pro residues. The helical transmembrane segment at 91-111 (GGVFALTLLLILTTTGLFFVF) threads the bilayer. The Lumenal segment spans residues 112–119 (DCPYLARK). Residues 120–140 (LTLAIPIIAAILFFFVMSCLL) traverse the membrane as a helical segment. Residues 141–235 (QTSFTDPGIL…GNCVGRRNYR (95 aa)) are Cytoplasmic-facing. The region spanning 192–242 (KYCFTCKMFRPPRTSHCSVCDNCVERFDHHCPWVGNCVGRRNYRFFYAFIL) is the DHHC domain. The S-palmitoyl cysteine intermediate role is filled by cysteine 222. The helical transmembrane segment at 236–256 (FFYAFILSLSFLTAFIFACVV) threads the bilayer. Residues 257-277 (THLTLRAQGSNFLSTLKETPA) are Lumenal-facing. Residues 278-298 (SVLELVICFFSIWSILGLSGF) traverse the membrane as a helical segment. Residues 299-388 (HTYLVASNLT…PDASMVGGHP (90 aa)) are Cytoplasmic-facing. Residues 364–388 (LPSPIRSDEPACRAKPDASMVGGHP) form a disordered region. Over residues 369–379 (RSDEPACRAKP) the composition is skewed to basic and acidic residues.

This sequence belongs to the DHHC palmitoyltransferase family. ERF2/ZDHHC9 subfamily. As to expression, widely expressed.

The protein localises to the golgi apparatus membrane. The enzyme catalyses L-cysteinyl-[protein] + hexadecanoyl-CoA = S-hexadecanoyl-L-cysteinyl-[protein] + CoA. In terms of biological role, palmitoyltransferase that catalyzes the addition of palmitate onto various protein substrates, such as CGAS, HRAS and LCK. Acts as a negative regulator of the cGAS-STING pathway be mediating palmitoylation and inactivation of CGAS. May also have a palmitoyltransferase activity toward the beta-2 adrenergic receptor/ADRB2 and therefore regulate G protein-coupled receptor signaling. This Homo sapiens (Human) protein is Palmitoyltransferase ZDHHC18.